Here is a 246-residue protein sequence, read N- to C-terminus: MKTVAIIAASGVGKRMKLDGGMSKQMIEIGGHTVIWHTMKAFQDAESVDAVYIATKSDSIEPFKQLARENGFTKIHSIIEGGKERQDSIRNCMDLIEEEIESSGVMPDAILVHDGARPFIQPEEIDEIARISAEHGACVPATKPKDTIKYIGRTPEVFGETLDRSRLLQVQTPQGFTPAKLIEAHRKAASDGVYATDDAALVERYFPEQEIHVYEMGYHNIKITTPEDVPVGEAILAGLKARKSEN.

Belongs to the IspD/TarI cytidylyltransferase family. IspD subfamily.

It carries out the reaction 2-C-methyl-D-erythritol 4-phosphate + CTP + H(+) = 4-CDP-2-C-methyl-D-erythritol + diphosphate. It participates in isoprenoid biosynthesis; isopentenyl diphosphate biosynthesis via DXP pathway; isopentenyl diphosphate from 1-deoxy-D-xylulose 5-phosphate: step 2/6. In terms of biological role, catalyzes the formation of 4-diphosphocytidyl-2-C-methyl-D-erythritol from CTP and 2-C-methyl-D-erythritol 4-phosphate (MEP). This is 2-C-methyl-D-erythritol 4-phosphate cytidylyltransferase from Chlorobaculum parvum (strain DSM 263 / NCIMB 8327) (Chlorobium vibrioforme subsp. thiosulfatophilum).